Reading from the N-terminus, the 567-residue chain is Cytochrome P450 monooxygenase 69 (567 aa).

Residues 7 to 24 traverse the membrane as a helical segment; it reads ELAALTVVLLATGVLFYA. N-linked (GlcNAc...) asparagine glycosylation is found at asparagine 25, asparagine 81, asparagine 223, and asparagine 279. Cysteine 475 contributes to the heme binding site.

The protein belongs to the cytochrome P450 family. The cofactor is heme.

Its subcellular location is the membrane. It participates in secondary metabolite biosynthesis. Its function is as follows. Cytochrome P450 monooxygenase that is able to use 4-ethoxybenzoic acid as a substrate for oxidation. The chain is Cytochrome P450 monooxygenase 69 from Postia placenta (strain ATCC 44394 / Madison 698-R) (Brown rot fungus).